Reading from the N-terminus, the 419-residue chain is D-galactonate dehydratase family member SEN1436 (419 aa).

Substrate contacts are provided by Gln-45 and His-129. The Proton donor/acceptor role is filled by Tyr-160. Asp-225 contributes to the Mg(2+) binding site. Catalysis depends on His-227, which acts as the Proton donor/acceptor. Residues Glu-251 and Glu-277 each coordinate Mg(2+). Substrate-binding residues include Glu-277, Arg-298, His-327, Asp-331, and Glu-354.

It belongs to the mandelate racemase/muconate lactonizing enzyme family. GalD subfamily. As to quaternary structure, homotetramer. Requires Mg(2+) as cofactor.

The enzyme catalyses D-gluconate = 2-dehydro-3-deoxy-D-gluconate + H2O. Functionally, has low D-gluconate dehydratase activity (in vitro), suggesting that it has no significant role in D-gluconate degradation in vivo. Has no detectable activity with a panel of 70 other acid sugars (in vitro). This Salmonella enteritidis PT4 (strain P125109) protein is D-galactonate dehydratase family member SEN1436.